A 1060-amino-acid chain; its full sequence is Carbamoyl phosphate synthase large chain (1060 aa).

Residues 1 to 400 form a carboxyphosphate synthetic domain region; that stretch reads MPRDESINKV…SLNKAIRSLD (400 aa). The ATP site is built by arginine 127, arginine 167, glycine 173, glycine 174, glutamine 206, valine 208, glutamate 213, glycine 240, isoleucine 241, histidine 242, glutamine 283, and glutamate 297. Residues 131 to 326 enclose the ATP-grasp 1 domain; sequence DSFMKKLNEP…IAKIAAKIAV (196 aa). 3 residues coordinate Mg(2+): glutamine 283, glutamate 297, and asparagine 299. Mn(2+)-binding residues include glutamine 283, glutamate 297, and asparagine 299. The oligomerization domain stretch occupies residues 401 to 539; it reads IGADGFTETP…YGCYDLEDEV (139 aa). The segment at 540–926 is carbamoyl phosphate synthetic domain; it reads EVSDRRKVLI…YKSQLSASMD (387 aa). The region spanning 664-858 is the ATP-grasp 2 domain; it reads TEVLNKLGIP…LAKMAARLMM (195 aa). ATP is bound by residues arginine 700, lysine 739, leucine 741, glutamate 746, glycine 771, valine 772, histidine 773, serine 774, glutamine 814, and glutamate 829. 3 residues coordinate Mg(2+): glutamine 814, glutamate 829, and asparagine 831. Residues glutamine 814, glutamate 829, and asparagine 831 each contribute to the Mn(2+) site. Positions 925–1060 constitute an MGS-like domain; it reads MDLLNEGKVF…VKSLDEYHGM (136 aa). The tract at residues 927 to 1060 is allosteric domain; that stretch reads LLNEGKVFIS…VKSLDEYHGM (134 aa).

Belongs to the CarB family. In terms of assembly, composed of two chains; the small (or glutamine) chain promotes the hydrolysis of glutamine to ammonia, which is used by the large (or ammonia) chain to synthesize carbamoyl phosphate. Tetramer of heterodimers (alpha,beta)4. Requires Mg(2+) as cofactor. It depends on Mn(2+) as a cofactor.

It carries out the reaction hydrogencarbonate + L-glutamine + 2 ATP + H2O = carbamoyl phosphate + L-glutamate + 2 ADP + phosphate + 2 H(+). The catalysed reaction is hydrogencarbonate + NH4(+) + 2 ATP = carbamoyl phosphate + 2 ADP + phosphate + 2 H(+). The protein operates within amino-acid biosynthesis; L-arginine biosynthesis; carbamoyl phosphate from bicarbonate: step 1/1. It participates in pyrimidine metabolism; UMP biosynthesis via de novo pathway; (S)-dihydroorotate from bicarbonate: step 1/3. Large subunit of the glutamine-dependent carbamoyl phosphate synthetase (CPSase). CPSase catalyzes the formation of carbamoyl phosphate from the ammonia moiety of glutamine, carbonate, and phosphate donated by ATP, constituting the first step of 2 biosynthetic pathways, one leading to arginine and/or urea and the other to pyrimidine nucleotides. The large subunit (synthetase) binds the substrates ammonia (free or transferred from glutamine from the small subunit), hydrogencarbonate and ATP and carries out an ATP-coupled ligase reaction, activating hydrogencarbonate by forming carboxy phosphate which reacts with ammonia to form carbamoyl phosphate. In Methanothermobacter thermautotrophicus (strain ATCC 29096 / DSM 1053 / JCM 10044 / NBRC 100330 / Delta H) (Methanobacterium thermoautotrophicum), this protein is Carbamoyl phosphate synthase large chain.